The chain runs to 52 residues: UPF0391 membrane protein XOO4217 (52 aa).

Helical transmembrane passes span 5 to 25 (AMIFFVIAIIAAVLGFSGIAG) and 27 to 47 (ATNIAWILFVVFLILAVISMF).

Belongs to the UPF0391 family.

Its subcellular location is the cell membrane. This chain is UPF0391 membrane protein XOO4217, found in Xanthomonas oryzae pv. oryzae (strain KACC10331 / KXO85).